The following is a 697-amino-acid chain: SPX domain-containing membrane protein OsI_08463 (697 aa).

Positions 2–145 (VNFGKRLMAD…GYKFTDYYVS (144 aa)) constitute an SPX domain. 11 helical membrane passes run 247–267 (FMSL…TYII), 278–298 (LGAA…AQVF), 315–335 (LVFS…AYDV), 338–356 (LTVL…ARAV), 375–395 (AGFV…AGLL), 411–431 (LPGW…WISF), 513–533 (LLIY…SSVV), 544–564 (TVAM…VIVG), 576–596 (ILVA…RFTS), 604–624 (VSSA…NLSL), and 670–690 (LLNV…VATF).

This sequence belongs to the major facilitator superfamily.

It localises to the membrane. This chain is SPX domain-containing membrane protein OsI_08463, found in Oryza sativa subsp. indica (Rice).